Here is a 243-residue protein sequence, read N- to C-terminus: Small ribosomal subunit protein uS3 (243 aa).

In terms of domain architecture, KH type-2 spans 39 to 110 (IRGFIQKKYA…QVRINVVEIE (72 aa)). Residues 215–243 (DQPLPVGASPRRKGSRRPQQFEDRSNDGK) form a disordered region. A compositionally biased stretch (basic and acidic residues) spans 233-243 (QQFEDRSNDGK).

Belongs to the universal ribosomal protein uS3 family. In terms of assembly, part of the 30S ribosomal subunit. Forms a tight complex with proteins S10 and S14.

In terms of biological role, binds the lower part of the 30S subunit head. Binds mRNA in the 70S ribosome, positioning it for translation. This is Small ribosomal subunit protein uS3 from Prochlorococcus marinus (strain MIT 9211).